A 393-amino-acid polypeptide reads, in one-letter code: MSAAILGQVWTRKLLPIPWRLCVPGRCVSSNFKAADLQVQVTREPQKKPAPSQPLLFGKTFTDHMLMVEWNSKTGWGPPRIQPFQNLTLHPACSGLHYSLQLFEGLKAYKGRDKQVRLFRPWLNMDRMLRSARRLCLPDFDKQELLECIRQLIEVDKDWVPDGNGTSLYVRPVLIGNEPSLGVGMVTQALLFVILCPVGSYFPGDSMTPVSLLADPSFVRAWIGGVGDCKLGGNYGPTVAVQQEAQKKGCEQVLWLYGPDHQLTEVGTMNIFVYWTHEDGELELATPPLDGIILPGVVRQSLLDLARTWGEFRVAERKVTMKELKRALEEGRVREVFGSGTACQVCPVHQILYEGKQLHIPTMENGPELILRFQKELKAIQYGTSAHDWMLRV.

A mitochondrion-targeting transit peptide spans 1 to 27 (MSAAILGQVWTRKLLPIPWRLCVPGRC). Tyr-169 is a substrate binding site. N6-(pyridoxal phosphate)lysine is present on Lys-230. Lys-322 bears the N6-acetyllysine mark.

Belongs to the class-IV pyridoxal-phosphate-dependent aminotransferase family. In terms of assembly, homodimer. Pyridoxal 5'-phosphate serves as cofactor. In terms of tissue distribution, expressed in all tissues.

It localises to the mitochondrion. It catalyses the reaction L-leucine + 2-oxoglutarate = 4-methyl-2-oxopentanoate + L-glutamate. It carries out the reaction L-isoleucine + 2-oxoglutarate = (S)-3-methyl-2-oxopentanoate + L-glutamate. The catalysed reaction is L-valine + 2-oxoglutarate = 3-methyl-2-oxobutanoate + L-glutamate. In terms of biological role, catalyzes the first reaction in the catabolism of the essential branched chain amino acids leucine, isoleucine, and valine. May also function as a transporter of branched chain alpha-keto acids. In Rattus norvegicus (Rat), this protein is Branched-chain-amino-acid aminotransferase, mitochondrial (Bcat2).